We begin with the raw amino-acid sequence, 421 residues long: MRFETLQLHAGYEPEPTTLSRQVPIYPTTSYVFKSPEHAANLFALKEFGNIYSRIMNPTVDVLEKRLAALEGGKAALATASGHAAQFLALTTLAQAGDNIVSTPNLYGGTFNQFKVTLKRLGIEVRFTSREERPEEFLALTDEKTRAWWVESIGNPALNIPDLEALAQAAREKGVALIVDNTFGMGGYLLRPLAWGAALVTHSLTKWVGGHGAVIAGAIVDGGNFPWEGGRYPLLTEPQPGYHGLRLTEAFGELAFIVKARVDGLRDQGQALGPFEAWVVLLGMETLSLRAERHVENTLHLAHWLLEQPQVAWVNYPGLPHHPHHDRAQKYFKGKPGAVLTFGLKGGYEAAKRFISRLKLISHLANVGDTRTLAIHPASTTHSQLSPEEQAQAGVSPEMVRLSVGLEHVEDLKAELKEALA.

Lys-206 bears the N6-(pyridoxal phosphate)lysine mark.

It belongs to the trans-sulfuration enzymes family. Homotetramer. The cofactor is pyridoxal 5'-phosphate.

It catalyses the reaction O-acetyl-L-homoserine + hydrogen sulfide = L-homocysteine + acetate. The protein operates within amino-acid biosynthesis; L-methionine biosynthesis via de novo pathway; L-homocysteine from O-acetyl-L-homoserine: step 1/1. Inhibited by the carbonyl reagents hydroxylamine and phenylhydrazine. Also inhibited by methionine and propargylglycine. Catalyzes the conversion of O-acetyl-L-homoserine (OAH) into homocysteine in the methionine biosynthesis pathway. Has weak activity with O-acetyl-L-serine, O-phospho-L-serine, L-serine, O-succinyl-L-homoserine and L-homoserine. Shows low CTT beta-lyase activity and very low CTT gamma-synthase activity. This chain is O-acetyl-L-homoserine sulfhydrylase 1, found in Thermus thermophilus (strain ATCC 27634 / DSM 579 / HB8).